A 279-amino-acid polypeptide reads, in one-letter code: Probable endonuclease 4 (279 aa).

The Zn(2+) site is built by His69, His109, Glu145, Asp179, His182, His216, Asp229, His231, and Glu261.

The protein belongs to the AP endonuclease 2 family. Zn(2+) is required as a cofactor.

The enzyme catalyses Endonucleolytic cleavage to 5'-phosphooligonucleotide end-products.. Functionally, endonuclease IV plays a role in DNA repair. It cleaves phosphodiester bonds at apurinic or apyrimidinic (AP) sites, generating a 3'-hydroxyl group and a 5'-terminal sugar phosphate. The sequence is that of Probable endonuclease 4 from Tolumonas auensis (strain DSM 9187 / NBRC 110442 / TA 4).